Here is a 293-residue protein sequence, read N- to C-terminus: Methylsterol monooxygenase 1 (293 aa).

Helical transmembrane passes span 55-75 (LIVH…FQFI) and 100-120 (GILF…YYFT). The Fatty acid hydroxylase domain occupies 144-274 (GCAVIEDTWH…FTWWDRIFGT (131 aa)). The Histidine box-1 motif lies at 157 to 161 (HRLLH). The Histidine box-2 signature appears at 170-174 (HKVHH). A helical membrane pass occupies residues 199–219 (FFIGIVLLCDHVILLWAWVTM). A Histidine box-3 motif is present at residues 249–255 (HHDFHHM).

Belongs to the sterol desaturase family. The cofactor is Fe cation. Post-translationally, ubiquitinated by MARCHF6, leading to proteasomal degradation.

The protein resides in the endoplasmic reticulum membrane. The catalysed reaction is 4,4-dimethyl-5alpha-cholest-7-en-3beta-ol + 6 Fe(II)-[cytochrome b5] + 3 O2 + 5 H(+) = 4alpha-carboxy-4beta-methyl-5alpha-cholest-7-ene-3beta-ol + 6 Fe(III)-[cytochrome b5] + 4 H2O. It carries out the reaction 4,4-dimethyl-5alpha-cholesta-8,24-dien-3beta-ol + 6 Fe(II)-[cytochrome b5] + 3 O2 + 5 H(+) = 4beta-methylzymosterol-4alpha-carboxylate + 6 Fe(III)-[cytochrome b5] + 4 H2O. The enzyme catalyses 4alpha-methylzymosterol + 6 Fe(II)-[cytochrome b5] + 3 O2 + 5 H(+) = 4alpha-carboxyzymosterol + 6 Fe(III)-[cytochrome b5] + 4 H2O. It catalyses the reaction 4alpha-methyl-5alpha-cholest-7-en-3beta-ol + 6 Fe(II)-[cytochrome b5] + 3 O2 + 5 H(+) = 4alpha-carboxy-5alpha-cholest-7-en-3beta-ol + 6 Fe(III)-[cytochrome b5] + 4 H2O. The catalysed reaction is 4,4-dimethyl-5alpha-cholest-8-en-3beta-ol + 6 Fe(II)-[cytochrome b5] + 3 O2 + 5 H(+) = 4alpha-carboxy-4beta-methyl-5alpha-cholest-8-en-3beta-ol + 6 Fe(III)-[cytochrome b5] + 4 H2O. It carries out the reaction 4alpha-methyl-5alpha-cholest-8-en-3beta-ol + 6 Fe(II)-[cytochrome b5] + 3 O2 + 5 H(+) = 4alpha-carboxy-5alpha-cholest-8-ene-3beta-ol + 6 Fe(III)-[cytochrome b5] + 4 H2O. It participates in steroid biosynthesis; zymosterol biosynthesis; zymosterol from lanosterol: step 3/6. The protein operates within steroid biosynthesis; cholesterol biosynthesis. Functionally, catalyzes the three-step monooxygenation required for the demethylation of 4,4-dimethyl and 4alpha-methylsterols, which can be subsequently metabolized to cholesterol. In Rattus norvegicus (Rat), this protein is Methylsterol monooxygenase 1 (Msmo1).